Reading from the N-terminus, the 649-residue chain is DNA mismatch repair protein MutL (649 aa).

This sequence belongs to the DNA mismatch repair MutL/HexB family.

This protein is involved in the repair of mismatches in DNA. It is required for dam-dependent methyl-directed DNA mismatch repair. May act as a 'molecular matchmaker', a protein that promotes the formation of a stable complex between two or more DNA-binding proteins in an ATP-dependent manner without itself being part of a final effector complex. In Streptococcus pneumoniae serotype 2 (strain D39 / NCTC 7466), this protein is DNA mismatch repair protein MutL.